The sequence spans 65 residues: MFLSAVFFAKSKSKNILVRMVSEAGTGFCFNTKRNRLREKLTLLHYDPVVKQRVLFVEKKKIRSL.

The transit peptide at 1-8 (MFLSAVFF) directs the protein to the mitochondrion.

The protein belongs to the bacterial ribosomal protein bL33 family. In terms of assembly, component of the mitochondrial large ribosomal subunit (mt-LSU). Mature mammalian 55S mitochondrial ribosomes consist of a small (28S) and a large (39S) subunit. The 28S small subunit contains a 12S ribosomal RNA (12S mt-rRNA) and 30 different proteins. The 39S large subunit contains a 16S rRNA (16S mt-rRNA), a copy of mitochondrial valine transfer RNA (mt-tRNA(Val)), which plays an integral structural role, and 52 different proteins.

It is found in the mitochondrion. This chain is Large ribosomal subunit protein bL33m (MRPL33), found in Homo sapiens (Human).